Reading from the N-terminus, the 527-residue chain is Matrix metalloproteinase-19 (527 aa).

The N-terminal stretch at 1 to 18 is a signal peptide; sequence MDWQQLWLAFLLPMTVSG. Positions 19 to 98 are excised as a propeptide; sequence RALGPTEKEA…EDPFNQKSLK (80 aa). The short motif at 84-91 is the Cysteine switch element; the sequence is PRCGLEDP. Residue Cys-86 coordinates Zn(2+). Asn-109 is a glycosylation site (N-linked (GlcNAc...) asparagine). Residue His-213 coordinates Zn(2+). Residue Glu-214 is part of the active site. Residues His-217 and His-223 each contribute to the Zn(2+) site. 4 Hemopexin repeats span residues 286–333, 334–372, 377–425, and 426–471; these read PNPC…WEGL, PGNL…FPMK, EPNL…FTGV, and PDRP…WMHC. A disulfide bridge connects residues Cys-289 and Cys-471. 2 N-linked (GlcNAc...) asparagine glycosylation sites follow: Asn-464 and Asn-479. The tract at residues 473 to 500 is disordered; it reads SQTPDTNSSTGDVTPSTTDTVLGTTPST. Asp-512 carries the GPI-anchor amidated aspartate lipid modification. Residues 513 to 527 constitute a propeptide, removed in mature form; the sequence is SASLSFSANVTLLGA. The N-linked (GlcNAc...) asparagine glycan is linked to Asn-521.

The protein belongs to the peptidase M10A family. Zn(2+) serves as cofactor. The cofactor is Ca(2+). Activated by autolytic cleavage after Lys-98. Post-translationally, tyrosine phosphorylated by PKDCC/VLK. As to expression, highly expressed in the liver. Expressed in the arterial tunica media of large blood vessels.

The protein localises to the cell membrane. It localises to the secreted. The protein resides in the extracellular space. It is found in the extracellular matrix. Its function is as follows. Endopeptidase that degrades various components of the extracellular matrix, such as aggrecan and cartilage oligomeric matrix protein (comp), during development, haemostasis and pathological conditions (arthritic disease). May also play a role in neovascularization or angiogenesis. Hydrolyzes collagen type IV, laminin, nidogen, nascin-C isoform, fibronectin, and type I gelatin. The chain is Matrix metalloproteinase-19 (Mmp19) from Mus musculus (Mouse).